The sequence spans 377 residues: Flagellin (377 aa).

It belongs to the bacterial flagellin family.

It localises to the secreted. Its subcellular location is the bacterial flagellum. In terms of biological role, flagellin is the subunit protein which polymerizes to form the filaments of bacterial flagella. This Clostridium tyrobutyricum protein is Flagellin (fla).